The chain runs to 208 residues: Tektin bundle-interacting protein 1 (208 aa).

Microtubule inner protein component of sperm flagellar doublet microtubules. Expressed in trachea multiciliated cells.

The protein resides in the cytoplasm. The protein localises to the cytoskeleton. It localises to the cilium axoneme. Its subcellular location is the flagellum axoneme. Functionally, microtubule inner protein (MIP) part of the dynein-decorated doublet microtubules (DMTs) in cilia axoneme, which is required for motile cilia beating. Located at the center of the tektin bundle where may function to recruit tektins or stabilize the bundle. In Bos taurus (Bovine), this protein is Tektin bundle-interacting protein 1 (TEKTIP1).